Consider the following 311-residue polypeptide: Olfactory receptor 8G1 (311 aa).

Topologically, residues 1 to 25 are extracellular; sequence MSGENNSSVTEFILAGLSEQPELQL. Asn-5 and Asn-6 each carry an N-linked (GlcNAc...) asparagine glycan. A helical transmembrane segment spans residues 26–46; the sequence is PLFLLFLGIYVVTVVGNLGMT. At 47–54 the chain is on the cytoplasmic side; the sequence is TLIWLSSH. A helical transmembrane segment spans residues 55–75; it reads LHTPMYYFLSSLSFIDFCHST. Residues 76–99 lie on the Extracellular side of the membrane; sequence VITPKMLVNFVTEKNIISYPECMT. Cys-97 and Cys-189 are oxidised to a cystine. A helical membrane pass occupies residues 100–120; that stretch reads QLYFFLVFAIAECHMLAAMAY. The Cytoplasmic segment spans residues 121–139; that stretch reads DRYMAICSPLLYSVIISNK. A helical transmembrane segment spans residues 140 to 160; it reads ACFSLILGVYIIGLVCASVHT. Over 161 to 197 the chain is Extracellular; it reads GCMFRVQFCKFDLINHYFCDLLPLLKLSCSSIYVNKL. A helical membrane pass occupies residues 198 to 217; it reads LILCVGAFNILVPSLTILCS. The Cytoplasmic portion of the chain corresponds to 218-237; it reads YIFIIASILHIRSTEGRSKA. Residues 238-258 traverse the membrane as a helical segment; it reads FSTCSSHMLAVVIFFGSAAFM. Residues 259–271 lie on the Extracellular side of the membrane; that stretch reads YLQPSSISSMDQG. Residues 272-292 traverse the membrane as a helical segment; the sequence is KVSSVFYTIIVPMLNPLIYSL. The Cytoplasmic segment spans residues 293–311; that stretch reads RNKDVHVSLKKMLQRRTLL.

The protein belongs to the G-protein coupled receptor 1 family.

Its subcellular location is the cell membrane. Its function is as follows. Odorant receptor. This chain is Olfactory receptor 8G1 (OR8G1), found in Homo sapiens (Human).